The following is a 23-amino-acid chain: Endochitinase B (23 aa).

It belongs to the glycosyl hydrolase 19 family. Chitinase class I subfamily.

The catalysed reaction is Random endo-hydrolysis of N-acetyl-beta-D-glucosaminide (1-&gt;4)-beta-linkages in chitin and chitodextrins.. In terms of biological role, defense against chitin-containing fungal pathogens. The polypeptide is Endochitinase B (Pisum sativum (Garden pea)).